We begin with the raw amino-acid sequence, 226 residues long: Probable N-acetyl-alpha-D-glucosaminyl L-malate deacetylase 2 (226 aa).

H13, D16, and H127 together coordinate Zn(2+).

Belongs to the PIGL family. Zn(2+) is required as a cofactor.

The enzyme catalyses (S)-malyl N-acetyl-alpha-D-glucosaminide + H2O = (S)-malyl alpha-D-glucosaminide + acetate. Its function is as follows. Involved in bacillithiol (BSH) biosynthesis. Catalyzes the second step of the pathway, the deacetylation of N-acetylglucosaminylmalate (GlcNAc-Mal) to glucosamine malate (GlcN-Mal). Could also be involved in bacillithiol-detoxifying pathways through formation of S-mercapturic adducts. The sequence is that of Probable N-acetyl-alpha-D-glucosaminyl L-malate deacetylase 2 from Bacillus anthracis.